A 957-amino-acid polypeptide reads, in one-letter code: Translation initiation factor IF-2 (957 aa).

2 disordered regions span residues 34 to 282 and 311 to 367; these read KSHS…RVVK and SQSL…TIAG. Positions 107–161 are enriched in pro residues; it reads PARPQPPQAPTRPTPPAPVAPKPVEPVAAKPPAPPAKPEPTPPRPVPTLVPPPTR. Basic and acidic residues predominate over residues 163 to 188; that stretch reads TKKEEKVAATPPPRKELKEPPKKEKG. Positions 209–242 are enriched in pro residues; it reads PPAPAKPPEMAPKPALPELQPPPKPVRAPNPPKP. 2 stretches are compositionally biased toward basic and acidic residues: residues 250-259 and 266-275; these read LDDKSVSKVI and KDFDEEESKR. Residues 444 to 617 enclose the tr-type G domain; sequence RRPPVVTIMG…LLVAEVEDLY (174 aa). Residues 453 to 460 form a G1 region; that stretch reads GHVDHGKT. 453-460 contributes to the GTP binding site; the sequence is GHVDHGKT. Residues 478–482 are G2; the sequence is GITQH. The interval 503–506 is G3; sequence DTPG. Residues 503–507 and 557–560 contribute to the GTP site; these read DTPGH and NKID. Positions 557-560 are G4; it reads NKID. Residues 593–595 are G5; it reads SAL.

The protein belongs to the TRAFAC class translation factor GTPase superfamily. Classic translation factor GTPase family. IF-2 subfamily.

It is found in the cytoplasm. One of the essential components for the initiation of protein synthesis. Protects formylmethionyl-tRNA from spontaneous hydrolysis and promotes its binding to the 30S ribosomal subunits. Also involved in the hydrolysis of GTP during the formation of the 70S ribosomal complex. The protein is Translation initiation factor IF-2 of Thermosynechococcus vestitus (strain NIES-2133 / IAM M-273 / BP-1).